The sequence spans 445 residues: Phosphoglucosamine mutase (445 aa).

The active-site Phosphoserine intermediate is the Ser102. Mg(2+) is bound by residues Ser102, Asp241, Asp243, and Asp245. Ser102 carries the post-translational modification Phosphoserine.

It belongs to the phosphohexose mutase family. Mg(2+) is required as a cofactor. In terms of processing, activated by phosphorylation.

It carries out the reaction alpha-D-glucosamine 1-phosphate = D-glucosamine 6-phosphate. Functionally, catalyzes the conversion of glucosamine-6-phosphate to glucosamine-1-phosphate. The sequence is that of Phosphoglucosamine mutase from Hahella chejuensis (strain KCTC 2396).